We begin with the raw amino-acid sequence, 196 residues long: GTP cyclohydrolase-2 (196 aa).

49–53 (RVHSE) contributes to the GTP binding site. Residues cysteine 54, cysteine 65, and cysteine 67 each coordinate Zn(2+). Residues glutamine 70, 92-94 (EGR), and threonine 114 each bind GTP. The active-site Proton acceptor is aspartate 126. Catalysis depends on arginine 128, which acts as the Nucleophile. 2 residues coordinate GTP: threonine 149 and lysine 154.

The protein belongs to the GTP cyclohydrolase II family. In terms of assembly, homodimer. Zn(2+) serves as cofactor.

The catalysed reaction is GTP + 4 H2O = 2,5-diamino-6-hydroxy-4-(5-phosphoribosylamino)-pyrimidine + formate + 2 phosphate + 3 H(+). It functions in the pathway cofactor biosynthesis; riboflavin biosynthesis; 5-amino-6-(D-ribitylamino)uracil from GTP: step 1/4. Its function is as follows. Catalyzes the conversion of GTP to 2,5-diamino-6-ribosylamino-4(3H)-pyrimidinone 5'-phosphate (DARP), formate and pyrophosphate. This Shigella boydii serotype 18 (strain CDC 3083-94 / BS512) protein is GTP cyclohydrolase-2.